The following is a 147-amino-acid chain: Small ribosomal subunit protein bS16 (147 aa).

The tract at residues 81 to 147 is disordered; sequence QKFTGDTSPS…GDNSGEKAEA (67 aa). Basic and acidic residues-rich tracts occupy residues 95 to 104 and 114 to 125; these read QPERPNKDDL and EAPREAITKKSE. The segment covering 126-140 has biased composition (low complexity); that stretch reads GAAADEASESAAGDN.

Belongs to the bacterial ribosomal protein bS16 family.

This Cutibacterium acnes (strain DSM 16379 / KPA171202) (Propionibacterium acnes) protein is Small ribosomal subunit protein bS16.